A 549-amino-acid polypeptide reads, in one-letter code: Cytoplasmic trehalase (549 aa).

Substrate-binding positions include R168, 175-176, N212, 221-223, 292-294, and G324; these read WD, RSQ, and RDE. Catalysis depends on proton donor/acceptor residues D326 and E509. Residue E525 participates in substrate binding.

The protein belongs to the glycosyl hydrolase 37 family. As to quaternary structure, monomer.

It is found in the cytoplasm. It catalyses the reaction alpha,alpha-trehalose + H2O = alpha-D-glucose + beta-D-glucose. It participates in glycan degradation; trehalose degradation; D-glucose from alpha,alpha-trehalose: step 1/1. Hydrolyzes trehalose to glucose. Could be involved, in cells returning to low osmolarity conditions, in the utilization of the accumulated cytoplasmic trehalose, which was synthesized in response to high osmolarity. The chain is Cytoplasmic trehalase from Shigella boydii serotype 4 (strain Sb227).